A 226-amino-acid chain; its full sequence is Potassium/proton antiporter CemA (226 aa).

3 helical membrane passes run 7–27 (FTSL…SLSF), 111–131 (IICF…LFIL), and 186–206 (IISG…KYWI).

Belongs to the CemA family.

Its subcellular location is the plastid. It is found in the chloroplast inner membrane. The enzyme catalyses K(+)(in) + H(+)(out) = K(+)(out) + H(+)(in). Contributes to K(+)/H(+) antiport activity by supporting proton efflux to control proton extrusion and homeostasis in chloroplasts in a light-dependent manner to modulate photosynthesis. Prevents excessive induction of non-photochemical quenching (NPQ) under continuous-light conditions. Indirectly promotes efficient inorganic carbon uptake into chloroplasts. The polypeptide is Potassium/proton antiporter CemA (Buxus microphylla (Littleleaf boxwood)).